Reading from the N-terminus, the 416-residue chain is Serine hydroxymethyltransferase (416 aa).

(6S)-5,6,7,8-tetrahydrofolate contacts are provided by residues Leu-118 and 122–124 (GHL). An N6-(pyridoxal phosphate)lysine modification is found at Lys-226. (6S)-5,6,7,8-tetrahydrofolate contacts are provided by residues Glu-242 and 350–352 (SPF).

Belongs to the SHMT family. Homodimer. Requires pyridoxal 5'-phosphate as cofactor.

The protein resides in the cytoplasm. The enzyme catalyses (6R)-5,10-methylene-5,6,7,8-tetrahydrofolate + glycine + H2O = (6S)-5,6,7,8-tetrahydrofolate + L-serine. The protein operates within one-carbon metabolism; tetrahydrofolate interconversion. It functions in the pathway amino-acid biosynthesis; glycine biosynthesis; glycine from L-serine: step 1/1. Its function is as follows. Catalyzes the reversible interconversion of serine and glycine with tetrahydrofolate (THF) serving as the one-carbon carrier. This reaction serves as the major source of one-carbon groups required for the biosynthesis of purines, thymidylate, methionine, and other important biomolecules. Also exhibits THF-independent aldolase activity toward beta-hydroxyamino acids, producing glycine and aldehydes, via a retro-aldol mechanism. This Helicobacter pylori (strain Shi470) protein is Serine hydroxymethyltransferase.